Reading from the N-terminus, the 318-residue chain is Protease HtpX homolog (318 aa).

The next 2 membrane-spanning stretches (helical) occupy residues 6–26 (TAMLLAFMTALFMFVGFLIGG) and 28–48 (GGMMIAFLIAAGMNFFSYWNS). Histidine 130 lines the Zn(2+) pocket. Glutamate 131 is a catalytic residue. A Zn(2+)-binding site is contributed by histidine 134. The next 2 helical transmembrane spans lie at 145 to 165 (ITATLAGAISMLGNFAFFFGG) and 173 to 193 (PLGFVGVLVAMIVAPLAAMLV). Glutamate 202 contributes to the Zn(2+) binding site. A disordered region spans residues 284–318 (NVSTGPVRAVNPTRKSRSVPNTGRGGSQPPRGPWS).

It belongs to the peptidase M48B family. Zn(2+) serves as cofactor.

It localises to the cell inner membrane. This Rhizobium etli (strain ATCC 51251 / DSM 11541 / JCM 21823 / NBRC 15573 / CFN 42) protein is Protease HtpX homolog.